A 309-amino-acid chain; its full sequence is Protein FdhE (309 aa).

It belongs to the FdhE family.

The protein localises to the cytoplasm. Its function is as follows. Necessary for formate dehydrogenase activity. In Escherichia coli (strain K12 / MC4100 / BW2952), this protein is Protein FdhE.